We begin with the raw amino-acid sequence, 949 residues long: MAM domain-containing glycosylphosphatidylinositol anchor protein 2 (949 aa).

The first 25 residues, 1 to 25 (MDLVYGLVWLLTVLLEGISGQGVYA), serve as a signal peptide directing secretion. Ig-like domains are found at residues 27–127 (PTVR…IRVD) and 134–232 (PVVT…KMVS). 2 disulfide bridges follow: C62–C110 and C159–C216. 3 N-linked (GlcNAc...) asparagine glycosylation sites follow: N92, N213, and N237. Ig-like domains are found at residues 242 to 328 (PSIK…NIIV), 340 to 436 (PDPY…VNIS), 442 to 533 (PNLT…ALVQ), and 540 to 627 (PAVE…FLVT). 2 cysteine pairs are disulfide-bonded: C264–C310 and C359–C417. 5 N-linked (GlcNAc...) asparagine glycosylation sites follow: N434, N443, N504, N610, and N703. Intrachain disulfides connect C465/C515 and C561/C611. A Fibronectin type-III domain is found at 638–738 (DTYNPVWQNR…TIRVIKYTGE (101 aa)). The MAM domain occupies 739 to 914 (FHCGFEDGNI…VSIAEGECAK (176 aa)). Residue D924 is the site of GPI-anchor amidated aspartate attachment. The propeptide at 925-949 (GAVGILVHIWLFPVIILISILSPRR) is removed in mature form.

As to quaternary structure, interacts (through the Ig-like domains) with NLGN2.

The protein resides in the cell membrane. Its function is as follows. May be involved in cell-cell interactions. The protein is MAM domain-containing glycosylphosphatidylinositol anchor protein 2 (Mdga2) of Mus musculus (Mouse).